The following is a 705-amino-acid chain: Polyribonucleotide nucleotidyltransferase (705 aa).

Mg(2+)-binding residues include D487 and D493. The region spanning 554–613 (PKILTMTINPDKIRDVIGPSGKQINKIIEETGVKIDIEQDGTIFISSTDESGNQKAKKII) is the KH domain. Residues 623 to 691 (GQLYLGKVKR…KQGRVNLSRK (69 aa)) form the S1 motif domain.

Belongs to the polyribonucleotide nucleotidyltransferase family. In terms of assembly, homodimer. Component of a possible RNA degradosome complex composed of rny, rnjA, rnjB, pnp, pfkA and eno (although rnjA and rnjB's presence is unclear). RNA helicase CshA may also be a member of this complex. The cofactor is Mg(2+).

The protein localises to the cytoplasm. The enzyme catalyses RNA(n+1) + phosphate = RNA(n) + a ribonucleoside 5'-diphosphate. Involved in mRNA degradation. Catalyzes the phosphorolysis of single-stranded polyribonucleotides processively in the 3'- to 5'-direction. Necessary for competence development in Bacillus subtilis. May be necessary for modification of the srfA transcript (stabilization or translation activation). Involved in processing precursor type I toxin-antitoxin RNAs antitoxin SR4 and SR5 RNAs to their mature forms. The sequence is that of Polyribonucleotide nucleotidyltransferase from Bacillus subtilis (strain 168).